Consider the following 303-residue polypeptide: Protoheme IX farnesyltransferase (303 aa).

7 helical membrane-spanning segments follow: residues 25-45, 54-74, 118-138, 151-171, 177-197, 230-250, and 280-300; these read MGLV…AIVL, IPQI…ACAL, LLFA…VGYV, WNTV…WTAI, LVAV…FYAL, LVVL…FIVL, and FIYS…ISLI.

Belongs to the UbiA prenyltransferase family. Protoheme IX farnesyltransferase subfamily. Interacts with CtaA.

Its subcellular location is the cell membrane. The catalysed reaction is heme b + (2E,6E)-farnesyl diphosphate + H2O = Fe(II)-heme o + diphosphate. It functions in the pathway porphyrin-containing compound metabolism; heme O biosynthesis; heme O from protoheme: step 1/1. Its function is as follows. Converts heme B (protoheme IX) to heme O by substitution of the vinyl group on carbon 2 of heme B porphyrin ring with a hydroxyethyl farnesyl side group. This is Protoheme IX farnesyltransferase from Staphylococcus saprophyticus subsp. saprophyticus (strain ATCC 15305 / DSM 20229 / NCIMB 8711 / NCTC 7292 / S-41).